A 248-amino-acid polypeptide reads, in one-letter code: Pyridoxine 5'-phosphate synthase (248 aa).

Asn12 is a 3-amino-2-oxopropyl phosphate binding site. Position 14–15 (14–15 (DH)) interacts with 1-deoxy-D-xylulose 5-phosphate. Arg23 contributes to the 3-amino-2-oxopropyl phosphate binding site. Catalysis depends on His48, which acts as the Proton acceptor. Arg50 and His55 together coordinate 1-deoxy-D-xylulose 5-phosphate. Catalysis depends on Glu75, which acts as the Proton acceptor. Thr105 is a binding site for 1-deoxy-D-xylulose 5-phosphate. The Proton donor role is filled by His196. 3-amino-2-oxopropyl phosphate-binding positions include Gly197 and 218–219 (GH).

The protein belongs to the PNP synthase family. As to quaternary structure, homooctamer; tetramer of dimers.

Its subcellular location is the cytoplasm. The catalysed reaction is 3-amino-2-oxopropyl phosphate + 1-deoxy-D-xylulose 5-phosphate = pyridoxine 5'-phosphate + phosphate + 2 H2O + H(+). Its pathway is cofactor biosynthesis; pyridoxine 5'-phosphate biosynthesis; pyridoxine 5'-phosphate from D-erythrose 4-phosphate: step 5/5. Its function is as follows. Catalyzes the complicated ring closure reaction between the two acyclic compounds 1-deoxy-D-xylulose-5-phosphate (DXP) and 3-amino-2-oxopropyl phosphate (1-amino-acetone-3-phosphate or AAP) to form pyridoxine 5'-phosphate (PNP) and inorganic phosphate. The chain is Pyridoxine 5'-phosphate synthase from Pseudomonas paraeruginosa (strain DSM 24068 / PA7) (Pseudomonas aeruginosa (strain PA7)).